The sequence spans 105 residues: Putative pterin-4-alpha-carbinolamine dehydratase (105 aa).

This sequence belongs to the pterin-4-alpha-carbinolamine dehydratase family.

The enzyme catalyses (4aS,6R)-4a-hydroxy-L-erythro-5,6,7,8-tetrahydrobiopterin = (6R)-L-erythro-6,7-dihydrobiopterin + H2O. The chain is Putative pterin-4-alpha-carbinolamine dehydratase from Sinorhizobium medicae (strain WSM419) (Ensifer medicae).